Reading from the N-terminus, the 334-residue chain is Glyceraldehyde-3-phosphate dehydrogenase (334 aa).

Residues 12–13 (TI) and G111 contribute to the NAD(+) site. 140–142 (SCN) contacts D-glyceraldehyde 3-phosphate. Catalysis depends on C141, which acts as the Nucleophile. Residue R167 participates in NAD(+) binding. D-glyceraldehyde 3-phosphate is bound at residue 192-193 (HG). NAD(+) is bound at residue Q298.

This sequence belongs to the glyceraldehyde-3-phosphate dehydrogenase family. In terms of assembly, homotetramer.

It is found in the encapsulin nanocompartment. It carries out the reaction D-glyceraldehyde 3-phosphate + phosphate + NADP(+) = (2R)-3-phospho-glyceroyl phosphate + NADPH + H(+). The catalysed reaction is D-glyceraldehyde 3-phosphate + phosphate + NAD(+) = (2R)-3-phospho-glyceroyl phosphate + NADH + H(+). It functions in the pathway carbohydrate degradation; glycolysis; pyruvate from D-glyceraldehyde 3-phosphate: step 1/5. Possible cargo protein of a type 4B encapsulin nanocompartment. Active in the presence of NAD and NADP, prefers NADP. The protein is Glyceraldehyde-3-phosphate dehydrogenase (gap) of Pyrococcus furiosus (strain ATCC 43587 / DSM 3638 / JCM 8422 / Vc1).